Consider the following 257-residue polypeptide: AT-hook motif nuclear-localized protein 16 (257 aa).

A disordered region spans residues 1 to 71 (MAGGTALTPT…SKNKPKPPII (71 aa)). Residues 53–65 (KRPRGRPAGSKNK) constitute a DNA-binding region (a.T hook). The 138-residue stretch at 77-214 (PNSLRANAVE…DEAASMQNQQ (138 aa)) folds into the PPC domain.

Interacts with FVE/MSI4 and MSI5 which are components of HDAC corepressor complexes. In terms of tissue distribution, preferentially expressed in the inflorescence meristem and young floral buds, as well as in seedling-stage vegetative meristems. Widely expressed in flowers, roots and stems, with relatively low expression in leaves.

The protein resides in the nucleus. Transcription factor that specifically binds AT-rich DNA sequences related to the nuclear matrix attachment regions (MARs). Encodes a nuclear matrix protein that acts in the maintenance of genomic integrity by silencing TEs and repeat-containing genes through epigenetic machinery. Acts as a chromatin remodeling factor that modifies the architecture of FLC and FWA chromatin by modulating both H3 acetylation and methylation leading to the regulation of FLC and FWA expression. Negatively regulates floral repressors including MAF4 and MAF5. Plays a transcription activation role in anther development. Regulates the expression of arabinogalactan proteins (AGPs) involved in the formation of the nexine layer of the pollen wall. Binds AGP6, AGP11, AGP23 and AGP40 promoters. The protein is AT-hook motif nuclear-localized protein 16 of Arabidopsis thaliana (Mouse-ear cress).